Consider the following 195-residue polypeptide: Small ribosomal subunit protein uS4c (195 aa).

Positions 82–143 (MRLDNILFRL…KQRSKALIQN (62 aa)) constitute an S4 RNA-binding domain.

The protein belongs to the universal ribosomal protein uS4 family. In terms of assembly, part of the 30S ribosomal subunit. Contacts protein S5. The interaction surface between S4 and S5 is involved in control of translational fidelity.

It localises to the plastid. The protein localises to the chloroplast. In terms of biological role, one of the primary rRNA binding proteins, it binds directly to 16S rRNA where it nucleates assembly of the body of the 30S subunit. With S5 and S12 plays an important role in translational accuracy. The sequence is that of Small ribosomal subunit protein uS4c (rps4) from Pillansia templemannii.